The following is a 132-amino-acid chain: Small ribosomal subunit protein uS9 (132 aa).

It belongs to the universal ribosomal protein uS9 family.

The chain is Small ribosomal subunit protein uS9 from Methanothrix thermoacetophila (strain DSM 6194 / JCM 14653 / NBRC 101360 / PT) (Methanosaeta thermophila).